A 362-amino-acid chain; its full sequence is Phosphoserine aminotransferase (362 aa).

Residues Ser-9 and Arg-42 each contribute to the L-glutamate site. Pyridoxal 5'-phosphate contacts are provided by residues 76–77 (GR), Trp-102, Thr-153, Asp-174, and Gln-197. Lys-198 bears the N6-(pyridoxal phosphate)lysine mark. Position 239–240 (239–240 (NT)) interacts with pyridoxal 5'-phosphate.

The protein belongs to the class-V pyridoxal-phosphate-dependent aminotransferase family. SerC subfamily. As to quaternary structure, homodimer. Pyridoxal 5'-phosphate serves as cofactor.

Its subcellular location is the cytoplasm. It carries out the reaction O-phospho-L-serine + 2-oxoglutarate = 3-phosphooxypyruvate + L-glutamate. It catalyses the reaction 4-(phosphooxy)-L-threonine + 2-oxoglutarate = (R)-3-hydroxy-2-oxo-4-phosphooxybutanoate + L-glutamate. It participates in amino-acid biosynthesis; L-serine biosynthesis; L-serine from 3-phospho-D-glycerate: step 2/3. It functions in the pathway cofactor biosynthesis; pyridoxine 5'-phosphate biosynthesis; pyridoxine 5'-phosphate from D-erythrose 4-phosphate: step 3/5. Catalyzes the reversible conversion of 3-phosphohydroxypyruvate to phosphoserine and of 3-hydroxy-2-oxo-4-phosphonooxybutanoate to phosphohydroxythreonine. The protein is Phosphoserine aminotransferase of Citrobacter koseri (strain ATCC BAA-895 / CDC 4225-83 / SGSC4696).